We begin with the raw amino-acid sequence, 308 residues long: Protein translocase subunit SecF (308 aa).

The next 6 membrane-spanning stretches (helical) occupy residues 28 to 48 (SIIL…NFGI), 140 to 160 (IEAG…YIWV), 164 to 184 (WYFG…ALGF), 194 to 214 (LSTI…SVVI), 246 to 266 (ILTV…GGEA), and 272 to 292 (VLVF…SAPI).

This sequence belongs to the SecD/SecF family. SecF subfamily. Forms a complex with SecD. Part of the essential Sec protein translocation apparatus which comprises SecA, SecYEG and auxiliary proteins SecDF-YajC and YidC.

The protein localises to the cell inner membrane. Functionally, part of the Sec protein translocase complex. Interacts with the SecYEG preprotein conducting channel. SecDF uses the proton motive force (PMF) to complete protein translocation after the ATP-dependent function of SecA. In Rickettsia conorii (strain ATCC VR-613 / Malish 7), this protein is Protein translocase subunit SecF.